The primary structure comprises 436 residues: Immediate-early phosphoprotein 57 (436 aa).

The tract at residues 71 to 140 is disordered; it reads VPKRERSKTP…TPSNQNPLTE (70 aa). Positions 104–119 are enriched in low complexity; sequence QRPAPSARSRRPQPYS. A compositionally biased stretch (polar residues) spans 127–138; the sequence is KPQSTPSNQNPL.

This sequence belongs to the herpesviridae UL69 family.

Its subcellular location is the host nucleus. It is found in the host cytoplasm. Functionally, acts at a post-transcriptional level to regulate viral gene expression. This chain is Immediate-early phosphoprotein 57 (57), found in Alcelaphine herpesvirus 1 (strain C500) (AlHV-1).